A 1210-amino-acid polypeptide reads, in one-letter code: MSSFSNVGFVPHDGENEEDAINLAPKSSESFPAEDSIFADGSPRHRTLFDSKKRFKLRPPLLASTPRVICRFQQASSGSSAPYFTREPTFQPIQEFIEMSEHFHDITENSQGYRFLNTKEPFSRHHSALHHPRLSFDVLPKVIDFSRRWIGRARDTLYRLSVAYSGQEELGIERARDELDDRREHINLSEIFGGSHSQENSCSSGGVFNLNFDKSIEDRQLSFENIDLDSTSPQSTNDVIWLRDMTTVSTISEPILHPSSKISFTSSSPSPQRNPKNEAQKNSSSKREETSMFRSDPMKLYQMILVKEAAFECVAEIGKHGNVQFVDLNAKMSLYSRTFVKQMRRCEEMERKLRFLEKQVITCKPGLDPKSIDYTDLSAPTQAEMIQLEHKLDQLEREFLDLNNNDYALRKNLNSSKEFLQVMRLVDEFFQVHKEEEAKARFERSATTDDIEMFSKSFGFGGLPSSNEMPLTPLLGSDDNAWFVAGVLPLDKKESFERVLWRACRRTAFVRTSDASFTVNDPVTLEPLQKCVFIVFFKGESLRLIVEKVCDGFNATQYPCPKSSKDRKMKMSETEGRMNDLTVVIDTTQTHRYTILKDMSFEIPIWLKNIQIQKSVFAVMNMFTVDTNGFLAGECWIPAAEEDDVRQALHDGFKASGTEVEPILNELWTNAPPPTFHRTNKFTNVFQSIVDSYGVSQYCEVNPAPYTIITFPFLFAVMFGDAAHGAILLLAALFFIRNERKIESKKIRDEIFNTFYGGRYIMMLMGIFSIYTGFLYNDAFAKSFNVFGSGWSNSYNETQLDWWIARSYRKHREYSLELVPEKSFDIEKTYPFGVDPIWNIADNRLSFLNSMKMKASVIIGITQMTFGVFLSVLNHIHFKSYIDIISNFIPQVIFLSCIFIYLCIQIIVKWIFFSVNAENVFGFEYPGSHCAPSLLIGLINMFMFKKRNEGYLNENGEVYSNCHLGYWYPNQRLVETILISISLACIPIMLFGKPLWVRFVTSKRHKLQENKSLKSLRRNGTTVSAPTSPVVDAGPPRFEDAELLLADELDIGEDIHHSLSDIFVHQAIHTIEFVLGCVSHTASYLRLWALSLAHAQLSEVMWHMVLIQGIHTVDHIENETIAMCLKPVVACVAFFIFASLSLSILIMMEGLSAFLHALRLHWVEFQSKFYLGTGHPFHAFYLKESLENAQLITEETDRLADISSGQHLHI.

Residues 1 to 715 (MSSFSNVGFV…YTIITFPFLF (715 aa)) are Cytoplasmic-facing. Residues 259 to 271 (SSKISFTSSSPSP) show a composition bias toward low complexity. The segment at 259-292 (SSKISFTSSSPSPQRNPKNEAQKNSSSKREETSM) is disordered. The segment covering 275–291 (PKNEAQKNSSSKREETS) has biased composition (basic and acidic residues). Residues 339–405 (FVKQMRRCEE…EREFLDLNNN (67 aa)) are a coiled coil. The chain crosses the membrane as a helical span at residues 716–736 (AVMFGDAAHGAILLLAALFFI). Topologically, residues 737-760 (RNERKIESKKIRDEIFNTFYGGRY) are extracellular. The helical transmembrane segment at 761–781 (IMMLMGIFSIYTGFLYNDAFA) threads the bilayer. The Cytoplasmic segment spans residues 782-855 (KSFNVFGSGW…SFLNSMKMKA (74 aa)). The chain crosses the membrane as a helical span at residues 856–876 (SVIIGITQMTFGVFLSVLNHI). The Extracellular portion of the chain corresponds to 877 to 892 (HFKSYIDIISNFIPQV). A helical membrane pass occupies residues 893 to 913 (IFLSCIFIYLCIQIIVKWIFF). Over 914–976 (SVNAENVFGF…WYPNQRLVET (63 aa)) the chain is Cytoplasmic. A helical membrane pass occupies residues 977 to 997 (ILISISLACIPIMLFGKPLWV). The Extracellular portion of the chain corresponds to 998–1127 (RFVTSKRHKL…NETIAMCLKP (130 aa)). N-linked (GlcNAc...) asparagine glycans are attached at residues asparagine 1010, asparagine 1019, and asparagine 1118. The helical transmembrane segment at 1128–1148 (VVACVAFFIFASLSLSILIMM) threads the bilayer. Topologically, residues 1149 to 1210 (EGLSAFLHAL…DISSGQHLHI (62 aa)) are cytoplasmic.

The protein belongs to the V-ATPase 116 kDa subunit family. V-ATPase is a heteromultimeric enzyme made up of two complexes: the ATP-hydrolytic V1 complex and the proton translocation V0 complex. The V1 complex consists of three catalytic AB heterodimers that form a heterohexamer, three peripheral stalks each consisting of EG heterodimers, one central rotor including subunits D and F, and the regulatory subunits C and H. The proton translocation complex V0 consists of the proton transport subunit a, a ring of proteolipid subunits c9c'', rotary subunit d, subunits e and f, and the accessory subunits vah-19/Ac45 and vah-20/PRR. In terms of tissue distribution, expressed in uterus.

It localises to the membrane. Functionally, subunit of the V0 complex of vacuolar(H+)-ATPase (V-ATPase), a multisubunit enzyme composed of a peripheral complex (V1) that hydrolyzes ATP and a membrane integral complex (V0) that translocates protons. V-ATPase is responsible for acidifying and maintaining the pH of intracellular compartments and in some cell types, is targeted to the plasma membrane, where it is responsible for acidifying the extracellular environment. This is V-type proton ATPase 116 kDa subunit a 4 from Caenorhabditis elegans.